The chain runs to 463 residues: FAD-dependent monooxygenase nodM (463 aa).

A helical membrane pass occupies residues 5–25; the sequence is EFKVIIVGGSLAGLTLAHCLL. FAD contacts are provided by Glu-35, Gly-49, Arg-108, Asp-305, and Ala-318. Residues 438–458 traverse the membrane as a helical segment; it reads ILLGFTGVFTSALAMVVLLHI.

It belongs to the paxM FAD-dependent monooxygenase family. FAD is required as a cofactor.

It localises to the membrane. Its pathway is secondary metabolite biosynthesis. FAD-dependent monooxygenase; part of the gene cluster that mediates the biosynthesis of the indole diterpenes nodulisporic acids (NA). Nodulisporic acid A (NAA) and its chemically modified derivatives are of particular significance because of their highly potent insecticidal activity against blood-feeding arthropods and lack of observable adverse effects on mammals, in particular the tremogenicity associated with the paspaline-derived IDTs is not observed. The geranylgeranyl diphosphate (GGPP) synthase ggs1, localized outside of the cluster, is proposed to catalyze the first step in nodulisporic acid biosynthesis via conversion of farnesyl pyrophosphate and isopentyl pyrophosphate into geranylgeranyl pyrophosphate (GGPP). Condensation of indole-3-glycerol phosphate with GGPP by the prenyl transferase nodC then forms 3-geranylgeranylindole (3-GGI). Epoxidation by the FAD-dependent monooxygenase nodM leads to a single-epoxidized-GGI that is substrate of the terpene cyclase nodB for cyclization to yield emindole SB. The terminal methyl carbon, C28, of emindole SB is then oxidized by the cytochrome P450 monooxygenase nodW to produce nodulisporic acid F (NAF), the pentacyclic core of NAA. NAF is converted to nodulisporic acid E (NAE) via prenylation. This step is probably performed by one of the indole diterpene prenyltransferases nodD1 or nodD2. Several oxidation steps performed by the FAD-linked oxidoreductase nodO and one of the cytochrome P450 monooxygenase nodR, nodX or nodZ further convert NAE to nodulisporic acid D (NAD). NAD is substrate of cytochrome P450 monooxygenase nodJ to produce the precursor of nodulisporic acid C (NAC), converted to NAC by one of the indole diterpene prenyltransferases nodD1 or nodD2. The FAD-dependent monooxygenase nodY2 then oxidizes NAC to nodulisporic acid B (NAB). Finally NAB is converted to NAA by one of the cytochrome P450 monooxygenases nodR, nodX or nodZ. In Hypoxylon pulicicidum, this protein is FAD-dependent monooxygenase nodM.